Here is a 380-residue protein sequence, read N- to C-terminus: Alcohol dehydrogenase-like 4 (380 aa).

Zn(2+) is bound by residues Cys47, Thr49, His70, Cys100, Cys103, Cys106, Cys114, and Cys180. An alcohol contacts are provided by Thr49 and His70. Thr49 is an NAD(+) binding site. Residues 205–210 (GLGAVG), Asp229, Lys234, 298–300 (LGV), Phe325, and Arg375 each bind NAD(+).

Belongs to the zinc-containing alcohol dehydrogenase family. Class-III subfamily. Homodimer. It depends on Zn(2+) as a cofactor.

Its subcellular location is the cytoplasm. It carries out the reaction a primary alcohol + NAD(+) = an aldehyde + NADH + H(+). It catalyses the reaction a secondary alcohol + NAD(+) = a ketone + NADH + H(+). The polypeptide is Alcohol dehydrogenase-like 4 (Arabidopsis thaliana (Mouse-ear cress)).